The chain runs to 263 residues: Pimeloyl-[acyl-carrier protein] methyl ester esterase (263 aa).

Residues W23, 90–91 (SL), and 152–156 (FLTLQ) contribute to the substrate site. Catalysis depends on S90, which acts as the Nucleophile. Residues D216 and H244 contribute to the active site. H244 is a binding site for substrate.

It belongs to the AB hydrolase superfamily. Carboxylesterase BioH family. In terms of assembly, monomer.

The protein resides in the cytoplasm. It catalyses the reaction 6-carboxyhexanoyl-[ACP] methyl ester + H2O = 6-carboxyhexanoyl-[ACP] + methanol + H(+). Its pathway is cofactor biosynthesis; biotin biosynthesis. The physiological role of BioH is to remove the methyl group introduced by BioC when the pimeloyl moiety is complete. It allows to synthesize pimeloyl-ACP via the fatty acid synthetic pathway through the hydrolysis of the ester bonds of pimeloyl-ACP esters. The protein is Pimeloyl-[acyl-carrier protein] methyl ester esterase of Nitrosospira multiformis (strain ATCC 25196 / NCIMB 11849 / C 71).